The primary structure comprises 558 residues: Glypican-1 (558 aa).

The first 23 residues, 1–23 (MELRARGWWLLCAAAALVACARG), serve as a signal peptide directing secretion. 7 disulfide bridges follow: C32-C68, C62-C256, C69-C259, C191-C343, C246-C279, C268-C415, and C272-C401. 2 N-linked (GlcNAc...) asparagine glycosylation sites follow: N79 and N116. The disordered stretch occupies residues 341-374 (QGCGNPKVNPQGPGPEEKRRRGKLAPRERPPSGT). Basic and acidic residues predominate over residues 355 to 370 (PEEKRRRGKLAPRERP). S486, S488, and S490 each carry an O-linked (Xyl...) (heparan sulfate) serine glycan. A disordered region spans residues 505 to 534 (RKSSSSRTPLTHALPGLSEQEGQKTSAASC). A lipid anchor (GPI-anchor amidated serine) is attached at S530. The propeptide at 531–558 (AASCPQPPTFLLPLLLFLALTVARPRWR) is removed in mature form.

Belongs to the glypican family. S-nitrosylated in a Cu(2+)-dependent manner. Nitric acid (NO) is released from the nitrosylated cysteines by ascorbate or by some other reducing agent, in a Cu(2+) or Zn(2+) dependent manner. This free nitric oxide is then capable of cleaving the heparan sulfate side chains. Post-translationally, N- and O-glycosylated. N-glycosylation is mainly of the complex type containing sialic acid. O-glycosylated with heparan sulfate. The heparan sulfate chains can be cleaved either by the action of heparanase or, degraded by a deaminative process that uses nitric oxide (NO) released from the S-nitrosylated cysteines. This process is triggered by ascorbate, or by some other reducing agent, in a Cu(2+)- or Zn(2+) dependent manner. Cu(2+) ions are provided by ceruloproteins such as APP, PRNP or CP which associate with GCP1 in intracellular compartments or lipid rafts. In terms of processing, this cell-associated glypican is further processed to give rise to a medium-released species.

It localises to the cell membrane. The protein resides in the endosome. Its subcellular location is the secreted. It is found in the extracellular space. Cell surface proteoglycan that bears heparan sulfate. Binds, via the heparan sulfate side chains, alpha-4 (V) collagen and participates in Schwann cell myelination. May act as a catalyst in increasing the rate of conversion of prion protein PRPN(C) to PRNP(Sc) via associating (via the heparan sulfate side chains) with both forms of PRPN, targeting them to lipid rafts and facilitating their interaction. Required for proper skeletal muscle differentiation by sequestering FGF2 in lipid rafts preventing its binding to receptors (FGFRs) and inhibiting the FGF-mediated signaling. The polypeptide is Glypican-1 (GPC1) (Homo sapiens (Human)).